The primary structure comprises 166 residues: Phospholipase A2 inhibitor (166 aa).

The signal sequence occupies residues 1–19 (MRLILLSGLLLLGIFLANG). A C-type lectin domain is found at 46-161 (LRGAFLTVYK…CDDNLLVVCE (116 aa)). 2 N-linked (GlcNAc...) asparagine glycosylation sites follow: Asn-61 and Asn-122. Intrachain disulfides connect Cys-83–Cys-160 and Cys-138–Cys-152.

Belongs to the alpha-type phospholipase A2 inhibitor family. In terms of assembly, homotrimer; non-covalently linked. Expressed by the liver.

It localises to the secreted. In terms of biological role, this phospholipase A2 inhibitor binds directly phospholipase A2 in the presence or absence of calcium. The chain is Phospholipase A2 inhibitor from Bothrops alternatus (Urutu).